Here is a 326-residue protein sequence, read N- to C-terminus: Eukaryotic translation initiation factor 3 subunit I (326 aa).

5 WD repeats span residues 8 to 47 (GHER…RLGT), 50 to 89 (GHQG…VIAS), 145 to 184 (MTES…KVVD), 188 to 227 (DHSA…CLKT), and 285 to 326 (GHFG…NIFE).

This sequence belongs to the eIF-3 subunit I family. Component of the eukaryotic translation initiation factor 3 (eIF-3) complex. The eIF-3 complex interacts with pix.

The protein localises to the cytoplasm. Functionally, component of the eukaryotic translation initiation factor 3 (eIF-3) complex, which is involved in protein synthesis of a specialized repertoire of mRNAs and, together with other initiation factors, stimulates binding of mRNA and methionyl-tRNAi to the 40S ribosome. The eIF-3 complex specifically targets and initiates translation of a subset of mRNAs involved in cell proliferation. The sequence is that of Eukaryotic translation initiation factor 3 subunit I from Drosophila simulans (Fruit fly).